We begin with the raw amino-acid sequence, 380 residues long: Erythronate-4-phosphate dehydrogenase (380 aa).

The substrate site is built by Ser45 and Thr66. NAD(+) is bound by residues Asp146, Thr174, 205–207 (ASR), and Asp231. Arg207 is an active-site residue. Glu236 is a catalytic residue. The Proton donor role is filled by His253. Residue Gly256 participates in NAD(+) binding. Tyr257 is a substrate binding site.

Belongs to the D-isomer specific 2-hydroxyacid dehydrogenase family. PdxB subfamily. Homodimer.

It localises to the cytoplasm. It carries out the reaction 4-phospho-D-erythronate + NAD(+) = (R)-3-hydroxy-2-oxo-4-phosphooxybutanoate + NADH + H(+). It participates in cofactor biosynthesis; pyridoxine 5'-phosphate biosynthesis; pyridoxine 5'-phosphate from D-erythrose 4-phosphate: step 2/5. Its function is as follows. Catalyzes the oxidation of erythronate-4-phosphate to 3-hydroxy-2-oxo-4-phosphonooxybutanoate. The chain is Erythronate-4-phosphate dehydrogenase from Pseudomonas putida (strain ATCC 700007 / DSM 6899 / JCM 31910 / BCRC 17059 / LMG 24140 / F1).